A 279-amino-acid chain; its full sequence is tRNA uridine(34) hydroxylase (279 aa).

Residues 126–221 form the Rhodanese domain; it reads TKPGMHVIDT…YLQSVKGADS (96 aa). Catalysis depends on Cys181, which acts as the Cysteine persulfide intermediate.

Belongs to the TrhO family.

It carries out the reaction uridine(34) in tRNA + AH2 + O2 = 5-hydroxyuridine(34) in tRNA + A + H2O. Its function is as follows. Catalyzes oxygen-dependent 5-hydroxyuridine (ho5U) modification at position 34 in tRNAs. This is tRNA uridine(34) hydroxylase from Anaplasma phagocytophilum (strain HZ).